Consider the following 77-residue polypeptide: MARVCQVTGKAPMVGNNVSHANNKTKRRFLPNLQNRRFFVESENRWVSLRVSNAGLRLIDKKGIDSVLADLRARGEV.

This sequence belongs to the bacterial ribosomal protein bL28 family.

The protein is Large ribosomal subunit protein bL28 of Cupriavidus necator (strain ATCC 17699 / DSM 428 / KCTC 22496 / NCIMB 10442 / H16 / Stanier 337) (Ralstonia eutropha).